The chain runs to 812 residues: 5-methyltetrahydropteroyltriglutamate--homocysteine methyltransferase 3, chloroplastic (812 aa).

The transit peptide at 1 to 33 (MGQLALQRLQPLASLPRRPPSLPPPSSATPSLP) directs the protein to the chloroplast. The disordered stretch occupies residues 13–33 (ASLPRRPPSLPPPSSATPSLP). Over residues 17-27 (RRPPSLPPPSS) the composition is skewed to pro residues. Positions 66 and 164 each coordinate 5-methyltetrahydropteroyltri-L-glutamate. The tract at residues 430-456 (MRQASRRSSPRVTNAAVQQDVDAVKKS) is disordered. Residues 485–487 (IGS) and E538 each bind L-homocysteine. Residues 485 to 487 (IGS) and E538 contribute to the L-methionine site. 5-methyltetrahydropteroyltri-L-glutamate-binding positions include D543, Y566, 569-570 (RC), and W615. D653 contacts L-homocysteine. D653 serves as a coordination point for L-methionine. Positions 695, 697, 706, 710, and 719 each coordinate Zn(2+). The active-site Proton donor is H749. C781 serves as a coordination point for Zn(2+).

The protein belongs to the vitamin-B12 independent methionine synthase family. The cofactor is Zn(2+). Expressed in seeds.

Its subcellular location is the plastid. The protein localises to the chloroplast. It carries out the reaction 5-methyltetrahydropteroyltri-L-glutamate + L-homocysteine = tetrahydropteroyltri-L-glutamate + L-methionine. It participates in amino-acid biosynthesis; L-methionine biosynthesis via de novo pathway; L-methionine from L-homocysteine (MetE route): step 1/1. In terms of biological role, catalyzes the transfer of a methyl group from 5-methyltetrahydrofolate to homocysteine resulting in methionine formation. This Arabidopsis thaliana (Mouse-ear cress) protein is 5-methyltetrahydropteroyltriglutamate--homocysteine methyltransferase 3, chloroplastic (MS3).